The following is a 245-amino-acid chain: 23S rRNA (guanosine-2'-O-)-methyltransferase RlmB (245 aa).

Positions 197, 217, and 226 each coordinate S-adenosyl-L-methionine.

This sequence belongs to the class IV-like SAM-binding methyltransferase superfamily. RNA methyltransferase TrmH family. RlmB subfamily.

The protein localises to the cytoplasm. It catalyses the reaction guanosine(2251) in 23S rRNA + S-adenosyl-L-methionine = 2'-O-methylguanosine(2251) in 23S rRNA + S-adenosyl-L-homocysteine + H(+). Specifically methylates the ribose of guanosine 2251 in 23S rRNA. The sequence is that of 23S rRNA (guanosine-2'-O-)-methyltransferase RlmB from Bordetella parapertussis (strain 12822 / ATCC BAA-587 / NCTC 13253).